The sequence spans 259 residues: Probable ABC transporter arginine-binding protein ArtJ (259 aa).

The first 25 residues, 1 to 25, serve as a signal peptide directing secretion; the sequence is MIKQIGRFFRAFIFIMPLSLTSCES. Residues Asn38, Glu45, Ala96, Gly97, Ser99, Arg104, and Phe149 each contribute to the L-arginine site.

It belongs to the bacterial solute-binding protein 3 family.

Its subcellular location is the secreted. The protein localises to the cell surface. In terms of biological role, probably part of an ABC transporter complex involved in arginine transport. Binds arginine. Interacts with host epithelial cells, suggesting a role in host-cell adhesion during infection. The sequence is that of Probable ABC transporter arginine-binding protein ArtJ from Chlamydia pneumoniae (Chlamydophila pneumoniae).